The sequence spans 343 residues: Beta-ketoacyl-[acyl-carrier-protein] synthase III 1 (343 aa).

Active-site residues include Cys-122 and His-268. An ACP-binding region spans residues 269–273; that stretch reads QANVR. Residue Asn-299 is part of the active site.

This sequence belongs to the thiolase-like superfamily. FabH family. In terms of assembly, homodimer.

The protein localises to the cytoplasm. It catalyses the reaction malonyl-[ACP] + acetyl-CoA + H(+) = 3-oxobutanoyl-[ACP] + CO2 + CoA. The protein operates within lipid metabolism; fatty acid biosynthesis. Functionally, essential enzyme that catalyzes the condensation reaction of fatty acid synthesis by the addition to an acyl acceptor of two carbons from malonyl-ACP. Catalyzes the first condensation reaction which initiates fatty acid synthesis and may therefore play a role in governing the total rate of fatty acid production. Possesses both acetoacetyl-ACP synthase and acetyl transacylase activities. Its substrate specificity determines the biosynthesis of branched-chain of fatty acids. This chain is Beta-ketoacyl-[acyl-carrier-protein] synthase III 1, found in Streptomyces coelicolor (strain ATCC BAA-471 / A3(2) / M145).